A 367-amino-acid chain; its full sequence is Alcohol dehydrogenase 2 (367 aa).

Cys48, His74, Cys107, Cys110, Cys113, Cys121, and Cys163 together coordinate Zn(2+). NAD(+) contacts are provided by residues 187-193 (GAGGGLG), Asp212, Lys216, 286-288 (VGI), and Arg361.

Belongs to the zinc-containing alcohol dehydrogenase family. In terms of assembly, homotetramer. The cofactor is Zn(2+).

It is found in the cytoplasm. It catalyses the reaction a primary alcohol + NAD(+) = an aldehyde + NADH + H(+). It carries out the reaction a secondary alcohol + NAD(+) = a ketone + NADH + H(+). The protein is Alcohol dehydrogenase 2 (alcB) of Emericella nidulans (strain FGSC A4 / ATCC 38163 / CBS 112.46 / NRRL 194 / M139) (Aspergillus nidulans).